A 348-amino-acid polypeptide reads, in one-letter code: Dihydroorotase (348 aa).

2 residues coordinate Zn(2+): histidine 14 and histidine 16. Residues 16-18 (HLR) and asparagine 42 contribute to the substrate site. 3 residues coordinate Zn(2+): lysine 100, histidine 137, and histidine 175. Position 100 is an N6-carboxylysine (lysine 100). Histidine 137 contacts substrate. Position 220 (leucine 220) interacts with substrate. Aspartate 248 contacts Zn(2+). Residue aspartate 248 is part of the active site. 2 residues coordinate substrate: histidine 252 and alanine 264.

Belongs to the metallo-dependent hydrolases superfamily. DHOase family. Class II DHOase subfamily. As to quaternary structure, homodimer. Requires Zn(2+) as cofactor.

The catalysed reaction is (S)-dihydroorotate + H2O = N-carbamoyl-L-aspartate + H(+). Its pathway is pyrimidine metabolism; UMP biosynthesis via de novo pathway; (S)-dihydroorotate from bicarbonate: step 3/3. In terms of biological role, catalyzes the reversible cyclization of carbamoyl aspartate to dihydroorotate. The protein is Dihydroorotase of Ectopseudomonas mendocina (strain ymp) (Pseudomonas mendocina).